A 240-amino-acid polypeptide reads, in one-letter code: Gas vesicle protein C (240 aa).

Residues 1-13 (MALKDKWQQDRIG) are compositionally biased toward basic and acidic residues. The segment at 1–20 (MALKDKWQQDRIGRQQGVQE) is disordered. 5 repeats span residues 18-50 (VQER…RQGF), 51-83 (VTGV…LENF), 84-116 (IQQL…LSEF), 117-149 (REDL…LAIF), and 150-207 (RQTL…LQDY). Positions 18–207 (VQERQQQVQT…GVFRAELQDY (190 aa)) are 5 X 33 AA tandem repeats.

Belongs to the gas vesicle GvpC family.

The protein resides in the gas vesicle. Confers stability, involved in shaping gas vesicles, hollow, gas filled proteinaceous nanostructures. During planktonic growth they allow positioning of the organism at a favorable depth for light or nutrient acquisition. The polypeptide is Gas vesicle protein C (Planktothrix agardhii (Oscillatoria agardhii)).